Here is a 163-residue protein sequence, read N- to C-terminus: MADSSFDVVSKVDRQEVDNALHQAAKELTTRFDFRNTGASIEWSGEETITLNADTEERLLAALDVFKEKLIRRDISLKAFDAGEPAQSGKIYKLSGTLVQGISSENAKKITKKIRDEGPKGVKAQIQGEELRVSSKKRDDLQGVISLLKGEDFGIALQFVNYR.

The protein belongs to the YajQ family.

Nucleotide-binding protein. This chain is Nucleotide-binding protein RER_17110, found in Rhodococcus erythropolis (strain PR4 / NBRC 100887).